The sequence spans 311 residues: Aspartate carbamoyltransferase catalytic subunit (311 aa).

Residues R55 and T56 each contribute to the carbamoyl phosphate site. K83 contacts L-aspartate. Carbamoyl phosphate-binding residues include R105, H133, and Q136. L-aspartate contacts are provided by R166 and R220. The carbamoyl phosphate site is built by G261 and P262.

The protein belongs to the aspartate/ornithine carbamoyltransferase superfamily. ATCase family. Heterododecamer (2C3:3R2) of six catalytic PyrB chains organized as two trimers (C3), and six regulatory PyrI chains organized as three dimers (R2).

It carries out the reaction carbamoyl phosphate + L-aspartate = N-carbamoyl-L-aspartate + phosphate + H(+). It participates in pyrimidine metabolism; UMP biosynthesis via de novo pathway; (S)-dihydroorotate from bicarbonate: step 2/3. Its function is as follows. Catalyzes the condensation of carbamoyl phosphate and aspartate to form carbamoyl aspartate and inorganic phosphate, the committed step in the de novo pyrimidine nucleotide biosynthesis pathway. In Chlorobium chlorochromatii (strain CaD3), this protein is Aspartate carbamoyltransferase catalytic subunit.